Reading from the N-terminus, the 346-residue chain is MCEGPSRISGPIPPDPTLCPDNYRRPTSAQGRLEGNALKLDLLTSDRALDTTAPRGPCIGPGAGEILERGQRGVGDVLLQLEGISLGPGASLKRKDPKDHEKENLRRIREIQKRFREQERSREQGQPRPLKALWRSPKYDKVESRVKAQLQEPGPASGTESAHFLRAHSRCGPGLPPPHVSSPQPTPPGPEAKEPGLGVDFIRHNARAAKRAPRRHSCSLQVLAQVLEQQRQAQEHYNATQKGHVPHYLLERRDLWRREAEARKQSQPDPAMPPGHTRMPENQRLETLTKLLQSQSQLLRELVLLPAGADSLRAQSHRAELDRKLVQVEEAIKIFSRPKVFVKMDD.

Residues 1–35 are disordered; sequence MCEGPSRISGPIPPDPTLCPDNYRRPTSAQGRLEG. The residue at position 91 (Ser-91) is a Phosphoserine. Positions 91–171 are required for binding to microtubules; it reads SLKRKDPKDH…AHFLRAHSRC (81 aa). Positions 114 to 125 are enriched in basic and acidic residues; that stretch reads RFREQERSREQG. Disordered regions lie at residues 114-137, 167-197, and 260-280; these read RFREQERSREQGQPRPLKALWRSP, AHSRCGPGLPPPHVSSPQPTPPGPEAKEPGL, and AEARKQSQPDPAMPPGHTRMP. At Ser-136 the chain carries Phosphoserine. Pro residues predominate over residues 174-190; the sequence is GLPPPHVSSPQPTPPGP. In terms of domain architecture, Enkurin spans 251 to 343; the sequence is ERRDLWRREA…IFSRPKVFVK (93 aa).

Interacts with alpha-tubulin. Interacts (via central region) with CCP110 (via N-terminal region); competes with CEP97 for binding to CCP110.

The protein resides in the cytoplasm. Its subcellular location is the cytoskeleton. It is found in the microtubule organizing center. It localises to the centrosome. The protein localises to the centriole. The protein resides in the cilium basal body. Its subcellular location is the cell projection. It is found in the cilium. It localises to the spindle. The protein localises to the spindle pole. The protein resides in the cilium axoneme. In terms of biological role, microtubule-binding protein which regulates microtubule organization and stability. Promotes the stability of astral microtubules and facilitates the proper orientation of the mitotic spindle. This allows the oriented division of basal keratinocytes and contributes to epidermal stratification. Required for the assembly of both primary and motile cilia. Destabilizes the interaction between CCP110 and CEP97 by competing with CEP97 for binding to CCP110 which promotes the removal of CCP110 and CEP97 from the mother centriole and allows the initiation of ciliogenesis. In Homo sapiens (Human), this protein is Enkurin domain-containing protein 1 (ENKD1).